We begin with the raw amino-acid sequence, 122 residues long: UPF0382 membrane protein SERP0230 (122 aa).

4 consecutive transmembrane segments (helical) span residues 3–23, 46–66, 69–89, and 98–118; these read VFII…AFGA, MYHG…SINV, AGWL…FLAL, and ITPI…IATL.

This sequence belongs to the UPF0382 family.

The protein resides in the cell membrane. This chain is UPF0382 membrane protein SERP0230, found in Staphylococcus epidermidis (strain ATCC 35984 / DSM 28319 / BCRC 17069 / CCUG 31568 / BM 3577 / RP62A).